The chain runs to 223 residues: Ribose-5-phosphate isomerase A (223 aa).

Residues 28–31 (TGST), 81–84 (DGAD), and 94–97 (KGGG) each bind substrate. E103 acts as the Proton acceptor in catalysis. K121 is a substrate binding site.

The protein belongs to the ribose 5-phosphate isomerase family. As to quaternary structure, homodimer.

The catalysed reaction is aldehydo-D-ribose 5-phosphate = D-ribulose 5-phosphate. It participates in carbohydrate degradation; pentose phosphate pathway; D-ribose 5-phosphate from D-ribulose 5-phosphate (non-oxidative stage): step 1/1. In terms of biological role, catalyzes the reversible conversion of ribose-5-phosphate to ribulose 5-phosphate. This Ruthia magnifica subsp. Calyptogena magnifica protein is Ribose-5-phosphate isomerase A.